We begin with the raw amino-acid sequence, 156 residues long: Ribosome maturation factor RimP (156 aa).

Belongs to the RimP family.

It is found in the cytoplasm. Its function is as follows. Required for maturation of 30S ribosomal subunits. This Dictyoglomus turgidum (strain DSM 6724 / Z-1310) protein is Ribosome maturation factor RimP.